Consider the following 468-residue polypeptide: Dimethylamine methyltransferase MtbB1 (468 aa).

A non-standard amino acid (pyrrolysine) is located at residue Pyl356.

This sequence belongs to the dimethylamine methyltransferase family.

It catalyses the reaction Co(I)-[dimethylamine-specific corrinoid protein] + dimethylamine + H(+) = methyl-Co(III)-[dimethylamine-specific corrinoid protein] + methylamine. The protein operates within one-carbon metabolism; methanogenesis from dimethylamine. Its function is as follows. Catalyzes the transfer of a methyl group from dimethylamine to the corrinoid cofactor of MtbC. This is Dimethylamine methyltransferase MtbB1 (mtbB1) from Methanosarcina mazei (strain ATCC BAA-159 / DSM 3647 / Goe1 / Go1 / JCM 11833 / OCM 88) (Methanosarcina frisia).